We begin with the raw amino-acid sequence, 260 residues long: Dolichol-phosphate mannosyltransferase subunit 1 (260 aa).

At alanine 2 the chain carries N-acetylalanine. Serine 3 and serine 9 each carry phosphoserine. GDP-alpha-D-mannose-binding residues include proline 32, tyrosine 34, glutamate 36, isoleucine 63, aspartate 65, aspartate 118, alanine 119, aspartate 120, arginine 147, arginine 234, and lysine 240. Aspartate 120 provides a ligand contact to Mg(2+). Aspartate 120 is a binding site for Mn(2+).

It belongs to the glycosyltransferase 2 family. Component of the dolichol-phosphate mannose (DPM) synthase complex composed of DPM1, DPM2 and DPM3; within the complex, directly interacts with DPM3. This interaction stabilizes DPM1. Mg(2+) serves as cofactor. Requires Mn(2+) as cofactor. It depends on Ca(2+) as a cofactor.

The protein resides in the endoplasmic reticulum. It catalyses the reaction a di-trans,poly-cis-dolichyl phosphate + GDP-alpha-D-mannose = a di-trans,poly-cis-dolichyl beta-D-mannosyl phosphate + GDP. It participates in protein modification; protein glycosylation. In terms of biological role, transfers mannose from GDP-mannose to dolichol monophosphate to form dolichol phosphate mannose (Dol-P-Man) which is the mannosyl donor in pathways leading to N-glycosylation, glycosyl phosphatidylinositol membrane anchoring, and O-mannosylation of proteins; catalytic subunit of the dolichol-phosphate mannose (DPM) synthase complex. The chain is Dolichol-phosphate mannosyltransferase subunit 1 (DPM1) from Homo sapiens (Human).